A 1722-amino-acid chain; its full sequence is Signal-induced proliferation-associated 1-like protein 2 (1722 aa).

Disordered regions lie at residues 1 to 29 (MSDPRPSQAEKHKLGRAASKFKDPSRAMQ) and 45 to 73 (MGPATLNTSSLSEGGGGGGGPANGTPAVP). The span at 57–66 (EGGGGGGGPA) shows a compositional bias: gly residues. A phosphoserine mark is found at serine 149, serine 380, and serine 384. Residues 362–404 (ASAASQTPVPVGPAGGCESPLGSKEDLNAKENPDADEGDGKSN) are disordered. Over residues 384-403 (SKEDLNAKENPDADEGDGKS) the composition is skewed to basic and acidic residues. Positions 596–813 (LLKLDEQGLS…RTRHEYLKDL (218 aa)) constitute a Rap-GAP domain. In terms of domain architecture, PDZ spans 951-1027 (EMTLRRNGLG…VKVVIIQPHE (77 aa)). Serine 1030 is modified (phosphoserine). Disordered stretches follow at residues 1068–1172 (HRVP…DHED), 1197–1246 (ERAL…FGSG), and 1328–1361 (AADGSMGDLSEVSSHSSGSHRSGSPSTHCSKSTG). 2 stretches are compositionally biased toward low complexity: residues 1091 to 1103 (LQCQPLLQQAQAA) and 1120 to 1131 (SSPSNQSSSSDP). Basic and acidic residues predominate over residues 1197–1218 (ERALQKDGSCKDSPNKLSHIGD). The span at 1220–1237 (SCSSHSSSNTLSSNTSSN) shows a compositional bias: low complexity. At serine 1245 the chain carries Phosphoserine. Residues 1328–1355 (AADGSMGDLSEVSSHSSGSHRSGSPSTH) are compositionally biased toward low complexity. Serine 1461, serine 1472, serine 1478, serine 1488, serine 1549, serine 1552, and serine 1591 each carry phosphoserine. Residues 1652–1712 (STLTGKVNQL…ATAQLRTFTE (61 aa)) adopt a coiled-coil conformation.

This is Signal-induced proliferation-associated 1-like protein 2 (Sipa1l2) from Rattus norvegicus (Rat).